The following is a 330-amino-acid chain: Agamous-like MADS-box protein AGL75 (330 aa).

An MADS-box domain is found at 19–61 (TSLSNRLETIFKKASELCTLCDIEACVIYYGPDGELKTWPKEK).

Interacts with MEE14/CBP1.

The protein localises to the nucleus. Probable transcription factor that may function in the maintenance of the proper function of the central cell in pollen tube attraction. The sequence is that of Agamous-like MADS-box protein AGL75 from Arabidopsis thaliana (Mouse-ear cress).